We begin with the raw amino-acid sequence, 185 residues long: Thymidine kinase (185 aa).

Residues 7 to 14 (GPMFAGKT) and 83 to 86 (DEIQ) each bind ATP. Glutamate 84 acts as the Proton acceptor in catalysis. Residues cysteine 139, cysteine 142, cysteine 177, and histidine 180 each contribute to the Zn(2+) site.

The protein belongs to the thymidine kinase family. In terms of assembly, homotetramer.

The protein localises to the cytoplasm. It carries out the reaction thymidine + ATP = dTMP + ADP + H(+). The sequence is that of Thymidine kinase from Pyrobaculum aerophilum (strain ATCC 51768 / DSM 7523 / JCM 9630 / CIP 104966 / NBRC 100827 / IM2).